The following is a 269-amino-acid chain: Hydroxyethylthiazole kinase (269 aa).

Met-48 provides a ligand contact to substrate. Residues Lys-124 and Thr-170 each contribute to the ATP site. Gly-197 is a binding site for substrate.

This sequence belongs to the Thz kinase family. Mg(2+) serves as cofactor.

It carries out the reaction 5-(2-hydroxyethyl)-4-methylthiazole + ATP = 4-methyl-5-(2-phosphooxyethyl)-thiazole + ADP + H(+). It functions in the pathway cofactor biosynthesis; thiamine diphosphate biosynthesis; 4-methyl-5-(2-phosphoethyl)-thiazole from 5-(2-hydroxyethyl)-4-methylthiazole: step 1/1. In terms of biological role, catalyzes the phosphorylation of the hydroxyl group of 4-methyl-5-beta-hydroxyethylthiazole (THZ). This is Hydroxyethylthiazole kinase from Clostridium kluyveri (strain NBRC 12016).